The primary structure comprises 251 residues: 5-oxoprolinase subunit A (251 aa).

The protein belongs to the LamB/PxpA family. As to quaternary structure, forms a complex composed of PxpA, PxpB and PxpC.

It catalyses the reaction 5-oxo-L-proline + ATP + 2 H2O = L-glutamate + ADP + phosphate + H(+). Functionally, catalyzes the cleavage of 5-oxoproline to form L-glutamate coupled to the hydrolysis of ATP to ADP and inorganic phosphate. This chain is 5-oxoprolinase subunit A, found in Tolumonas auensis (strain DSM 9187 / NBRC 110442 / TA 4).